We begin with the raw amino-acid sequence, 336 residues long: Holliday junction branch migration complex subunit RuvB (336 aa).

A large ATPase domain (RuvB-L) region spans residues 4 to 185 (ADRLISADIQ…FGIVQRLEFY (182 aa)). ATP contacts are provided by residues Ile24, Arg25, Gly66, Lys69, Thr70, Thr71, 132–134 (EDY), Arg175, Tyr185, and Arg222. Thr70 lines the Mg(2+) pocket. Residues 186 to 256 (NVDDLQHIVA…IASKALDMLN (71 aa)) form a small ATPAse domain (RuvB-S) region. Residues 259 to 336 (AAGFDYLDRK…RHFNRIMEAP (78 aa)) are head domain (RuvB-H). Residues Arg295, Arg314, and Arg319 each contribute to the DNA site.

It belongs to the RuvB family. As to quaternary structure, homohexamer. Forms an RuvA(8)-RuvB(12)-Holliday junction (HJ) complex. HJ DNA is sandwiched between 2 RuvA tetramers; dsDNA enters through RuvA and exits via RuvB. An RuvB hexamer assembles on each DNA strand where it exits the tetramer. Each RuvB hexamer is contacted by two RuvA subunits (via domain III) on 2 adjacent RuvB subunits; this complex drives branch migration. In the full resolvosome a probable DNA-RuvA(4)-RuvB(12)-RuvC(2) complex forms which resolves the HJ.

The protein resides in the cytoplasm. It catalyses the reaction ATP + H2O = ADP + phosphate + H(+). In terms of biological role, the RuvA-RuvB-RuvC complex processes Holliday junction (HJ) DNA during genetic recombination and DNA repair, while the RuvA-RuvB complex plays an important role in the rescue of blocked DNA replication forks via replication fork reversal (RFR). RuvA specifically binds to HJ cruciform DNA, conferring on it an open structure. The RuvB hexamer acts as an ATP-dependent pump, pulling dsDNA into and through the RuvAB complex. RuvB forms 2 homohexamers on either side of HJ DNA bound by 1 or 2 RuvA tetramers; 4 subunits per hexamer contact DNA at a time. Coordinated motions by a converter formed by DNA-disengaged RuvB subunits stimulates ATP hydrolysis and nucleotide exchange. Immobilization of the converter enables RuvB to convert the ATP-contained energy into a lever motion, pulling 2 nucleotides of DNA out of the RuvA tetramer per ATP hydrolyzed, thus driving DNA branch migration. The RuvB motors rotate together with the DNA substrate, which together with the progressing nucleotide cycle form the mechanistic basis for DNA recombination by continuous HJ branch migration. Branch migration allows RuvC to scan DNA until it finds its consensus sequence, where it cleaves and resolves cruciform DNA. In Proteus mirabilis (strain HI4320), this protein is Holliday junction branch migration complex subunit RuvB.